The following is a 71-amino-acid chain: Small ribosomal subunit protein eS17 (71 aa).

Belongs to the eukaryotic ribosomal protein eS17 family.

This is Small ribosomal subunit protein eS17 from Pyrobaculum arsenaticum (strain DSM 13514 / JCM 11321 / PZ6).